A 359-amino-acid chain; its full sequence is Malonyl-CoA reductase (359 aa).

16 to 19 provides a ligand contact to NADP(+); that stretch reads TGLV. The active-site Acyl-thioester intermediate is Cys-153. 183–184 provides a ligand contact to NADP(+); that stretch reads SG. The Proton acceptor role is filled by His-248. 335 to 336 contacts NADP(+); the sequence is NT.

This sequence belongs to the aspartate-semialdehyde dehydrogenase family. As to quaternary structure, homodimer and possibly a tetramer. It depends on Mg(2+) as a cofactor. Requires Mn(2+) as cofactor.

It catalyses the reaction 3-oxopropanoate + NADP(+) + CoA = malonyl-CoA + NADPH + H(+). With respect to regulation, activated by dithioerythritol (5 mM) and inhibited by the thiol-blocking agent iodoacetamide (0.1 mM). Functionally, catalyzes the reduction of malonyl-CoA to malonate semialdehyde, a key step in the 3-hydroxypropanoate and the 3-hydroxypropanoate/4-hydroxybutyrate cycles. Can also use succinyl-CoA and succinate semialdehyde as substrates but at a lower rate than malonyl-CoA. The sequence is that of Malonyl-CoA reductase (mcr) from Sulfurisphaera tokodaii (strain DSM 16993 / JCM 10545 / NBRC 100140 / 7) (Sulfolobus tokodaii).